Consider the following 334-residue polypeptide: Ketol-acid reductoisomerase (NADP(+)) (334 aa).

The KARI N-terminal Rossmann domain maps to 2–181; sequence TKVYYDQSVE…GATRAGVIET (180 aa). NADP(+) contacts are provided by residues 25-28, Arg-48, Ser-52, and 82-85; these read YGSQ and DEIQ. His-107 is an active-site residue. Residue Gly-133 coordinates NADP(+). The KARI C-terminal knotted domain occupies 182-327; the sequence is TFKEETETDL…RELRKMMPFI (146 aa). Mg(2+)-binding residues include Asp-190, Glu-194, Glu-226, and Glu-230. Residue Ser-251 coordinates substrate.

This sequence belongs to the ketol-acid reductoisomerase family. Requires Mg(2+) as cofactor.

It catalyses the reaction (2R)-2,3-dihydroxy-3-methylbutanoate + NADP(+) = (2S)-2-acetolactate + NADPH + H(+). The catalysed reaction is (2R,3R)-2,3-dihydroxy-3-methylpentanoate + NADP(+) = (S)-2-ethyl-2-hydroxy-3-oxobutanoate + NADPH + H(+). Its pathway is amino-acid biosynthesis; L-isoleucine biosynthesis; L-isoleucine from 2-oxobutanoate: step 2/4. The protein operates within amino-acid biosynthesis; L-valine biosynthesis; L-valine from pyruvate: step 2/4. Its function is as follows. Involved in the biosynthesis of branched-chain amino acids (BCAA). Catalyzes an alkyl-migration followed by a ketol-acid reduction of (S)-2-acetolactate (S2AL) to yield (R)-2,3-dihydroxy-isovalerate. In the isomerase reaction, S2AL is rearranged via a Mg-dependent methyl migration to produce 3-hydroxy-3-methyl-2-ketobutyrate (HMKB). In the reductase reaction, this 2-ketoacid undergoes a metal-dependent reduction by NADPH to yield (R)-2,3-dihydroxy-isovalerate. The polypeptide is Ketol-acid reductoisomerase (NADP(+)) (Staphylococcus haemolyticus (strain JCSC1435)).